We begin with the raw amino-acid sequence, 661 residues long: Pumilio domain-containing protein C56F2.08c (661 aa).

An RRM domain is found at 1-74 (MLYVSNLPVG…GPVQVMLAKP (74 aa)). Serine 102 carries the phosphoserine modification. Threonine 104 carries the post-translational modification Phosphothreonine. Serine 105 bears the Phosphoserine mark. The 354-residue stretch at 129–482 (INLDIVDSMI…RLMEEVGMTS (354 aa)) folds into the PUM-HD domain. Pumilio repeat units follow at residues 191–226 (SMLDDVAELSSDYLGNTVVQKFFEYCSDPIKEAMLE), 227–263 (RIAPYLAAIGIHKNGTWAAQKIIDVASTEKQMDLIVK), 264–302 (HLRPYTALLYFDQFGNYVAQCCLRFKYPKNTFLFEVMAR), and 374–410 (HLATHLHTTCTHKLASTLIFKLINNKQEPESRNLLLK). Residues serine 482, serine 486, serine 488, and serine 490 each carry the phosphoserine modification.

The protein localises to the cytoplasm. In Schizosaccharomyces pombe (strain 972 / ATCC 24843) (Fission yeast), this protein is Pumilio domain-containing protein C56F2.08c.